The primary structure comprises 114 residues: MLDVIKEIEAEQIRTDLPSFNVGDTVRIEVRIKEGEKERLQAFEGTVIKRQNGGLRETFTVRRVAYGVGVERTFPLNAPVIAGLKVVRRGKVRRAKLYYLRDRVGKAAKVKEIR.

This sequence belongs to the bacterial ribosomal protein bL19 family.

Functionally, this protein is located at the 30S-50S ribosomal subunit interface and may play a role in the structure and function of the aminoacyl-tRNA binding site. The polypeptide is Large ribosomal subunit protein bL19 (Clostridium acetobutylicum (strain ATCC 824 / DSM 792 / JCM 1419 / IAM 19013 / LMG 5710 / NBRC 13948 / NRRL B-527 / VKM B-1787 / 2291 / W)).